We begin with the raw amino-acid sequence, 293 residues long: Homoserine O-acetyltransferase (293 aa).

Cysteine 141 serves as the catalytic Acyl-thioester intermediate. 2 residues coordinate substrate: lysine 162 and serine 190. Histidine 234 (proton acceptor) is an active-site residue. The active site involves glutamate 236. Residue arginine 248 coordinates substrate.

Belongs to the MetA family.

It localises to the cytoplasm. It catalyses the reaction L-homoserine + acetyl-CoA = O-acetyl-L-homoserine + CoA. Its pathway is amino-acid biosynthesis; L-methionine biosynthesis via de novo pathway; O-acetyl-L-homoserine from L-homoserine: step 1/1. Its function is as follows. Transfers an acetyl group from acetyl-CoA to L-homoserine, forming acetyl-L-homoserine. This Campylobacter jejuni subsp. jejuni serotype O:2 (strain ATCC 700819 / NCTC 11168) protein is Homoserine O-acetyltransferase.